Consider the following 594-residue polypeptide: Protein wntless (594 aa).

Residues 1 to 13 (MSGTILENLSGRK) are Cytoplasmic-facing. The chain crosses the membrane as a helical span at residues 14 to 34 (LSILVATLLLCQVLCFLLGGL). At 35 to 239 (YAPLPAGHVT…AIHQNGGFTQ (205 aa)) the chain is on the lumenal side. Asn-58 is a glycosylation site (N-linked (GlcNAc...) asparagine). A helical transmembrane segment spans residues 240–260 (IWLLLKTMLFPFVVGIMIWFW). Over 261-270 (RRVHLLQRSP) the chain is Cytoplasmic. A helical transmembrane segment spans residues 271-291 (ALLEYMLIYLGAALTFLNLPL). At 292-311 (EYLSLVYEMPYMLLLSDIRQ) the chain is on the lumenal side. The helical transmembrane segment at 312 to 332 (GIFYAMLLTFWLVFAGEHMLI) threads the bilayer. The Cytoplasmic portion of the chain corresponds to 333–344 (QDAPNKSTIRSR). A helical membrane pass occupies residues 345–365 (YWKHLSAVVVGCISLFVFDIC). At 366-390 (ERGVQLRNPFYSIWTTPLGAKVAMT) the chain is on the lumenal side. A helical membrane pass occupies residues 391–411 (FIVLAGVSAAIYFLFLCYMIW). Over 412–473 (KVFRNIGDKR…ANESKGLIYR (62 aa)) the chain is Cytoplasmic. The helical transmembrane segment at 474–494 (FKFLMLATLVCAALTVAGFIM) threads the bilayer. Residues 495–514 (GQMAEGQWDWNDNVAIQPTS) lie on the Lumenal side of the membrane. A helical transmembrane segment spans residues 515-535 (AFLTGVYGMWNIYIFALLILY). Over 536-594 (APSHKQWPTMHHSDETTQSNENIVASAASEEIEFSHLPSDSNPSEISSLTSFTRKVAFD) the chain is Cytoplasmic. The disordered stretch occupies residues 571 to 594 (HLPSDSNPSEISSLTSFTRKVAFD). A compositionally biased stretch (polar residues) spans 573-588 (PSDSNPSEISSLTSFT).

The protein belongs to the wntless family. Interacts with wg; in the Golgi. Interacts with Vps35, a component of the retromer complex; wls stability is regulated by Vps35. As to expression, ubiquitously expressed in the wing imaginal disk, increased expression is observed in a stripe at the dorso-ventral boundary and other regions of the wing disk that express wg. Also expresses in the leg imaginal disk. During larval development, expression is seen in both motorneurons and muscle.

The protein resides in the presynaptic cell membrane. It is found in the postsynaptic cell membrane. The protein localises to the cell membrane. Its subcellular location is the endosome membrane. It localises to the endoplasmic reticulum membrane. The protein resides in the golgi apparatus membrane. Its function is as follows. A segment polarity gene required for wingless (wg)-dependent patterning processes, acting in both wg-sending cells and wg-target cells. In non-neuronal cells wls directs wg secretion. The wls traffic loop encompasses the Golgi, the cell surface, an endocytic compartment and a retrograde route leading back to the Golgi, and involves clathrin-mediated endocytosis and the retromer complex (a conserved protein complex consisting of Vps35 and Vps26). In neuronal cells (the larval motorneuron NMJ), the wg signal moves across the synapse via the release of wls-containing exosome-like vesicles. Postsynaptic wls is required for the trafficking of fz2 through the fz2-interacting protein Grip. This chain is Protein wntless, found in Drosophila melanogaster (Fruit fly).